A 216-amino-acid polypeptide reads, in one-letter code: Large ribosomal subunit protein uL3 (216 aa).

The segment at 135–156 (LGASHGTQRKHRSPGSIGGCAT) is disordered.

Belongs to the universal ribosomal protein uL3 family. As to quaternary structure, part of the 50S ribosomal subunit. Forms a cluster with proteins L14 and L19.

One of the primary rRNA binding proteins, it binds directly near the 3'-end of the 23S rRNA, where it nucleates assembly of the 50S subunit. The sequence is that of Large ribosomal subunit protein uL3 from Thermobifida fusca (strain YX).